Consider the following 69-residue polypeptide: DNA gyrase inhibitor YacG (69 aa).

Residues cysteine 13, cysteine 16, cysteine 32, and cysteine 36 each contribute to the Zn(2+) site.

The protein belongs to the DNA gyrase inhibitor YacG family. Interacts with GyrB. Requires Zn(2+) as cofactor.

Inhibits all the catalytic activities of DNA gyrase by preventing its interaction with DNA. Acts by binding directly to the C-terminal domain of GyrB, which probably disrupts DNA binding by the gyrase. This is DNA gyrase inhibitor YacG from Neisseria meningitidis serogroup C / serotype 2a (strain ATCC 700532 / DSM 15464 / FAM18).